Here is a 285-residue protein sequence, read N- to C-terminus: Protease HtpX homolog (285 aa).

2 consecutive transmembrane segments (helical) span residues 7 to 27 and 30 to 50; these read TAML…MIGG and GMTI…WFSD. Histidine 131 serves as a coordination point for Zn(2+). Glutamate 132 is an active-site residue. Position 135 (histidine 135) interacts with Zn(2+). A run of 2 helical transmembrane segments spans residues 141-161 and 177-197; these read ILIS…ANFA and IAGI…QMAI. Glutamate 202 is a binding site for Zn(2+).

This sequence belongs to the peptidase M48B family. Zn(2+) serves as cofactor.

The protein localises to the cell inner membrane. This chain is Protease HtpX homolog, found in Paraburkholderia phytofirmans (strain DSM 17436 / LMG 22146 / PsJN) (Burkholderia phytofirmans).